The chain runs to 281 residues: L-ornithine N(alpha)-acyltransferase (281 aa).

Belongs to the acetyltransferase family. OlsB subfamily.

The catalysed reaction is a (3R)-hydroxyacyl-[ACP] + L-ornithine = a lyso-ornithine lipid + holo-[ACP] + H(+). The protein operates within lipid metabolism. In terms of biological role, catalyzes the first step in the biosynthesis of ornithine lipids, which are phosphorus-free membrane lipids. Catalyzes the 3-hydroxyacyl-acyl carrier protein-dependent acylation of ornithine to form lyso-ornithine lipid (LOL). This Brucella abortus (strain 2308) protein is L-ornithine N(alpha)-acyltransferase.